Here is a 249-residue protein sequence, read N- to C-terminus: Probable transcriptional regulatory protein aq_1575 (249 aa).

Belongs to the TACO1 family.

Its subcellular location is the cytoplasm. In Aquifex aeolicus (strain VF5), this protein is Probable transcriptional regulatory protein aq_1575.